The primary structure comprises 396 residues: Adenosine 3'-phospho 5'-phosphosulfate transporter 2 (396 aa).

Residues 22-42 (NGGESAGNSPPSQRKSSTSES) are disordered. Positions 27-42 (AGNSPPSQRKSSTSES) are enriched in polar residues. Ser37 and Ser40 each carry phosphoserine. Asn57 carries an N-linked (GlcNAc...) asparagine glycan. The next 10 membrane-spanning stretches (helical) occupy residues 66–86 (CAGV…IFTV), 91–111 (PYGW…GLVE), 140–160 (LILA…LGYL), 163–183 (PTQV…SILI), 189–209 (GLLD…FTLA), 216–236 (NFNL…AAIG), 253–273 (VVFY…LVTG), 290–310 (FGYG…VLAL), 318–338 (IAAT…FVLF), and 342–362 (FTLQ…LNVY).

It belongs to the nucleotide-sugar transporter family. SLC35B subfamily.

Its subcellular location is the golgi apparatus membrane. In terms of biological role, mediates the transport of adenosine 3'-phospho 5'-phosphosulfate (PAPS), from cytosol into Golgi. PAPS is a universal sulfuryl donor for sulfation events that take place in the Golgi. Essential for viability. Involved in glycosaminoglycan synthesis and the subsequent signaling. May be involved in hh and dpp signaling by controlling the sulfation of heparan sulfate (HS). This chain is Adenosine 3'-phospho 5'-phosphosulfate transporter 2 (Papst2), found in Drosophila melanogaster (Fruit fly).